The sequence spans 250 residues: DNA polymerase sliding clamp (250 aa).

Belongs to the PCNA family. Homotrimer. The subunits circularize to form a toroid; DNA passes through its center. Replication factor C (RFC) is required to load the toroid on the DNA.

Its function is as follows. Sliding clamp subunit that acts as a moving platform for DNA processing. Responsible for tethering the catalytic subunit of DNA polymerase and other proteins to DNA during high-speed replication. The protein is DNA polymerase sliding clamp of Methanococcus maripaludis (strain C6 / ATCC BAA-1332).